Here is a 220-residue protein sequence, read N- to C-terminus: Ribose-5-phosphate isomerase A (220 aa).

Residues 28 to 31, 81 to 84, and 94 to 97 each bind substrate; these read TGST, DGAD, and KGGG. Residue Glu-103 is the Proton acceptor of the active site. Lys-121 lines the substrate pocket.

The protein belongs to the ribose 5-phosphate isomerase family. Homodimer.

The enzyme catalyses aldehydo-D-ribose 5-phosphate = D-ribulose 5-phosphate. The protein operates within carbohydrate degradation; pentose phosphate pathway; D-ribose 5-phosphate from D-ribulose 5-phosphate (non-oxidative stage): step 1/1. Its function is as follows. Catalyzes the reversible conversion of ribose-5-phosphate to ribulose 5-phosphate. In Hydrogenovibrio crunogenus (strain DSM 25203 / XCL-2) (Thiomicrospira crunogena), this protein is Ribose-5-phosphate isomerase A.